The following is a 550-amino-acid chain: Glucose-6-phosphate isomerase 1 (550 aa).

The active-site Proton donor is the Glu-353. Residues His-384 and Lys-512 contribute to the active site.

Belongs to the GPI family.

It localises to the cytoplasm. It catalyses the reaction alpha-D-glucose 6-phosphate = beta-D-fructose 6-phosphate. Its pathway is carbohydrate biosynthesis; gluconeogenesis. The protein operates within carbohydrate degradation; glycolysis; D-glyceraldehyde 3-phosphate and glycerone phosphate from D-glucose: step 2/4. Functionally, catalyzes the reversible isomerization of glucose-6-phosphate to fructose-6-phosphate. This Thiobacillus denitrificans (strain ATCC 25259 / T1) protein is Glucose-6-phosphate isomerase 1.